A 146-amino-acid chain; its full sequence is Anti-sigma F factor (146 aa).

It belongs to the anti-sigma-factor family.

The catalysed reaction is L-seryl-[protein] + ATP = O-phospho-L-seryl-[protein] + ADP + H(+). The enzyme catalyses L-threonyl-[protein] + ATP = O-phospho-L-threonyl-[protein] + ADP + H(+). Its function is as follows. Binds to sigma F and blocks its ability to form an RNA polymerase holoenzyme (E-sigma F). Phosphorylates SpoIIAA on a serine residue. This phosphorylation may enable SpoIIAA to act as an anti-anti-sigma factor that counteracts SpoIIAB and thus releases sigma F from inhibition. This chain is Anti-sigma F factor, found in Geobacillus stearothermophilus (Bacillus stearothermophilus).